Reading from the N-terminus, the 29-residue chain is Glucagon (29 aa).

This sequence belongs to the glucagon family.

Its subcellular location is the secreted. In terms of biological role, promotes hydrolysis of glycogen and lipids, and raises the blood sugar level. The polypeptide is Glucagon (gcg) (Thunnus obesus (Bigeye tuna)).